Here is a 161-residue protein sequence, read N- to C-terminus: MKKKYYISISLLMTFIVLVFDQVSKWLITISMKVGDSYEIIPNFLNITSHRNNGAAWGILSGKMLFFYIITIIILIVLVIFYIKEAQFNLFMQVAISLLFAGALGNFIDRVLHGEVVDFIDTNIFGYDFPIFNIADSSLTIGVIFVIITLIKDAIINKKEV.

Helical transmembrane passes span 9-29 (ISLLMTFIVLVFDQVSKWLIT), 63-83 (KMLFFYIITIIILIVLVIFYI), and 88-108 (FNLFMQVAISLLFAGALGNFI). Residues aspartate 118 and aspartate 136 contribute to the active site. A helical transmembrane segment spans residues 131–151 (IFNIADSSLTIGVIFVIITLI).

The protein belongs to the peptidase A8 family.

The protein localises to the cell membrane. The catalysed reaction is Release of signal peptides from bacterial membrane prolipoproteins. Hydrolyzes -Xaa-Yaa-Zaa-|-(S,diacylglyceryl)Cys-, in which Xaa is hydrophobic (preferably Leu), and Yaa (Ala or Ser) and Zaa (Gly or Ala) have small, neutral side chains.. The protein operates within protein modification; lipoprotein biosynthesis (signal peptide cleavage). Its function is as follows. This protein specifically catalyzes the removal of signal peptides from prolipoproteins. The polypeptide is Lipoprotein signal peptidase (Staphylococcus epidermidis (strain ATCC 35984 / DSM 28319 / BCRC 17069 / CCUG 31568 / BM 3577 / RP62A)).